The following is a 249-amino-acid chain: Isoprenyl transferase (249 aa).

Asp25 is an active-site residue. Residue Asp25 coordinates Mg(2+). Residues 26–29 (GNGR), Trp30, Arg38, His42, and 70–72 (STE) each bind substrate. The active-site Proton acceptor is the Asn73. Residues Trp74, Arg76, Arg197, and 203-205 (RLS) contribute to the substrate site. Glu216 contacts Mg(2+).

This sequence belongs to the UPP synthase family. As to quaternary structure, homodimer. It depends on Mg(2+) as a cofactor.

Functionally, catalyzes the condensation of isopentenyl diphosphate (IPP) with allylic pyrophosphates generating different type of terpenoids. The protein is Isoprenyl transferase of Streptococcus mutans serotype c (strain ATCC 700610 / UA159).